A 505-amino-acid polypeptide reads, in one-letter code: MWMRRNQIVRKLTLGVVTTVLGMSLSFSALSATPVETHGQLSIENGRLVDEQGKRVQLRGISSHGLQWFGDYVNKDSMKWLRDDWGINVFRVAMYTAADGYISNPSLANKVKEAVAAAQSLGVYIIIDWHILSDNDPNIYKAQAKTFFAEMAGLYGSSPNVIYEIANEPNGGVTWNGQIRPYALEVTDTIRSKDPDNLIIVGTGTWSQDIHDAADNQLPDPNTMYALHFYAGTHGQFLRDRIDYAQSRGAAIFVSEWGTSDASGNGGPFLPESQTWIDFLNNRGVSWVNWSLTDKSEASAALAPGASKSGGWTEQNLSTSGKFVREQIRAGANLGGGDTPTTPTEPTNPGNGTTGDVVLQYRNVDNNPSDDAIRMAVNIKNTGSTPIKLSDLQVRYYFHDDGKPGANLFVDWANVGPNNIVTSTGTPAASTDKANRYVLVTFSSGAGSLQPGAETGEVQVRIHAGDWSNVNETNDYSYGANVTSYANWDKITVHDKGTLVWGVEP.

The N-terminal stretch at 1–31 (MWMRRNQIVRKLTLGVVTTVLGMSLSFSALS) is a signal peptide. The segment at 32 to 334 (ATPVETHGQL…REQIRAGANL (303 aa)) is catalytic. Residues histidine 64, 68-69 (WF), tyrosine 95, and histidine 130 contribute to the substrate site. Glutamate 168 (proton donor) is an active-site residue. Tyrosine 230 contributes to the substrate binding site. Glutamate 256 acts as the Nucleophile in catalysis. Residues 262–263 (AS), tryptophan 290, and 295–297 (KSE) contribute to the substrate site. The disordered stretch occupies residues 332–355 (ANLGGGDTPTTPTEPTNPGNGTTG). Residues 335–352 (GGGDTPTTPTEPTNPGNG) are linker. Residues 339–355 (TPTTPTEPTNPGNGTTG) show a composition bias toward low complexity. Residues 353–505 (TTGDVVLQYR…KGTLVWGVEP (153 aa)) enclose the CBM3 domain.

Belongs to the glycosyl hydrolase 5 (cellulase A) family.

Its subcellular location is the secreted. The catalysed reaction is Endohydrolysis of (1-&gt;4)-beta-D-glucosidic linkages in cellulose, lichenin and cereal beta-D-glucans.. Functionally, endoglucanase with some exoglucanase activity. The chain is Endoglucanase 5 (celV) from Pectobacterium carotovorum subsp. carotovorum (Erwinia carotovora subsp. carotovora).